A 583-amino-acid polypeptide reads, in one-letter code: CD166 antigen (583 aa).

Positions 1-27 are cleaved as a signal peptide; that stretch reads MASKVSPSCRLVFCLLISAAVLRPGLG. 2 Ig-like V-type domains span residues 28–120 and 125–234; these read WYTV…TEDN and PTLV…KTIY. The Extracellular portion of the chain corresponds to 28–527; it reads WYTVNSAYGD…NREKVNDQAK (500 aa). Disulfide bonds link cysteine 43/cysteine 113 and cysteine 157/cysteine 220. N-linked (GlcNAc...) asparagine glycans are attached at residues asparagine 95, asparagine 167, asparagine 265, asparagine 306, asparagine 361, asparagine 457, asparagine 480, and asparagine 499. 3 Ig-like C2-type domains span residues 245 to 328, 333 to 409, and 416 to 501; these read PTEQ…TTIT, DLSL…ESLT, and PQIK…LNVS. Intrachain disulfides connect cysteine 270/cysteine 313, cysteine 354/cysteine 392, and cysteine 435/cysteine 485. A helical membrane pass occupies residues 528 to 549; it reads LIVGIVVGLLLAALVAGVVYWL. The Cytoplasmic segment spans residues 550–583; that stretch reads YMKKSKTASKHVNKDLGNMEENKKLEENNHKTEA. The segment at 562–583 is disordered; the sequence is NKDLGNMEENKKLEENNHKTEA. Basic and acidic residues predominate over residues 569–583; the sequence is EENKKLEENNHKTEA.

As to quaternary structure, homodimer. Interacts (via extracellular domain) with CD6 (via extracellular domain). Homodimerization and interaction with CD6 involve the same region and cannot occur simultaneously. The affinity for CD6 is much higher than the affinity for self-association. Interacts (via glycosylated extracellular domain) with LGALS1 and LGALS3. Interaction with LGALS1 or LGALS3 inhibits interaction with CD6. In terms of processing, glycosylated. As to expression, detected on brain motor neurons, in differentiating retinal ganglion cells and in adult retina. Detected on leukocytes and on lymphatic endothelial cells. Detected in spleen B cells and T-cells (at protein level). Detected in adult brain and embryonic spinal cord. Expressed at high levels in the brain, and lung, and at lower levels in the liver, and the kidney, as well as by activated leukocytes.

The protein localises to the cell membrane. Its subcellular location is the cell projection. It is found in the axon. It localises to the dendrite. In terms of biological role, cell adhesion molecule that mediates both heterotypic cell-cell contacts via its interaction with CD6, as well as homotypic cell-cell contacts. Promotes T-cell activation and proliferation via its interactions with CD6. Contributes to the formation and maturation of the immunological synapse via its interactions with CD6. Mediates homotypic interactions with cells that express ALCAM. Mediates attachment of dendritic cells onto endothelial cells via homotypic interaction. Inhibits endothelial cell migration and promotes endothelial tube formation via homotypic interactions. Required for normal organization of the lymph vessel network. Required for normal hematopoietic stem cell engraftment in the bone marrow. Plays a role in hematopoiesis; required for normal numbers of hematopoietic stem cells in bone marrow. Promotes in vitro osteoblast proliferation and differentiation. Promotes neurite extension, axon growth and axon guidance; axons grow preferentially on surfaces that contain ALCAM. Mediates outgrowth and pathfinding for retinal ganglion cell axons. This is CD166 antigen (Alcam) from Mus musculus (Mouse).